The chain runs to 201 residues: CASP-like protein 1F2 (201 aa).

Residues 1–29 (MITSIATTTAGAFEVKSLGFIPYPSQPKR) lie on the Cytoplasmic side of the membrane. The helical transmembrane segment at 30-50 (IFFMAQVIFRILAIAFAVASI) threads the bilayer. Residues 51–78 (SAMVTSDQNVIVFGMDTAARYSYSSAFR) lie on the Extracellular side of the membrane. A helical transmembrane segment spans residues 79–99 (FLVGANAVVCGFSVLSLIFVC). Topologically, residues 100-119 (LMSRRSEAILEKNYYLFLHD) are cytoplasmic. Residues 120–140 (MVMMVMMVSGCSAATAIGYVG) traverse the membrane as a helical segment. At 141 to 162 (RYGEKEITWTAVCDFVGKFCNQ) the chain is on the extracellular side. Residues 163–183 (ALVSIVLAYLALFCYVALTTL) form a helical membrane-spanning segment. Residues 184-201 (AAHKLNHSSSTAAIRQNE) are Cytoplasmic-facing.

Belongs to the Casparian strip membrane proteins (CASP) family. As to quaternary structure, homodimer and heterodimers.

It localises to the cell membrane. The chain is CASP-like protein 1F2 from Ricinus communis (Castor bean).